The following is a 422-amino-acid chain: Acylglycerol kinase, mitochondrial (422 aa).

Lysine 6 carries the post-translational modification N6-acetyllysine. Positions 15 to 31 are hydrophobic; sequence TTAGLCLLTWGGHWLYG. Residues 58–199 enclose the DAGKc domain; sequence AQVKKATVFL…LDVLQIKGEK (142 aa). Residues 249–271 form a disordered region; that stretch reads QASISYTGPTERPPSEPEETPVQ.

Belongs to the AGK family. In terms of assembly, component of the TIM22 complex, which core is composed of TIMM22, associated with TIMM10 (TIMM10A and/or TIMM10B), TIMM9, AGK and TIMM29. Interacts with SMIM26. The cofactor is Mg(2+).

It is found in the mitochondrion inner membrane. The protein localises to the mitochondrion intermembrane space. The catalysed reaction is a monoacylglycerol + ATP = a monoacyl-sn-glycero-3-phosphate + ADP + H(+). It catalyses the reaction a 1,2-diacyl-sn-glycerol + ATP = a 1,2-diacyl-sn-glycero-3-phosphate + ADP + H(+). The enzyme catalyses an N-acylsphing-4-enine + ATP = an N-acylsphing-4-enine 1-phosphate + ADP + H(+). It carries out the reaction 1-(9Z-octadecenoyl)-sn-glycerol + ATP = 1-(9Z-octadecenoyl)-sn-glycero-3-phosphate + ADP + H(+). The catalysed reaction is 1,2-di-(9Z-octadecenoyl)-sn-glycerol + ATP = 1,2-di-(9Z-octadecenoyl)-sn-glycero-3-phosphate + ADP + H(+). It catalyses the reaction a 1-acyl-sn-glycerol + ATP = a 1-acyl-sn-glycero-3-phosphate + ADP + H(+). The enzyme catalyses 1-hexadecanoyl-sn-glycerol + ATP = 1-hexadecanoyl-sn-glycero-3-phosphate + ADP + H(+). It carries out the reaction a 2-acylglycerol + ATP = a 2-acyl-sn-glycerol 3-phosphate + ADP + H(+). The catalysed reaction is 2-(5Z,8Z,11Z,14Z-eicosatetraenoyl)-glycerol + ATP = 2-(5Z,8Z,11Z,14Z-eicosatetraenoyl)-sn-glycero-3-phosphate + ADP + H(+). It catalyses the reaction 1-(5Z,8Z,11Z,14Z-eicosatetraenoyl)-sn-glycerol + ATP = 1-(5Z,8Z,11Z,14Z-eicosatetraenoyl)-sn-glycero-3-phosphate + ADP + H(+). The enzyme catalyses N-(hexanoyl)sphing-4-enine + ATP = N-hexanoylsphing-4-enine 1-phosphate + ADP + H(+). The protein operates within lipid metabolism; glycerolipid metabolism. Its function is as follows. Lipid kinase that can phosphorylate both monoacylglycerol and diacylglycerol to form lysophosphatidic acid (LPA) and phosphatidic acid (PA), respectively. Phosphorylates ceramide but not sphingosine. Phosphorylates 1,2-dioleoylglycerol more rapidly than 2,3-dioleoylglycerol. Independently of its lipid kinase activity, acts as a component of the TIM22 complex. The TIM22 complex mediates the import and insertion of multi-pass transmembrane proteins into the mitochondrial inner membrane by forming a twin-pore translocase that uses the membrane potential as the external driving force. In the TIM22 complex, required for the import of a subset of metabolite carriers into mitochondria, such as ANT1/SLC25A4 and SLC25A24, while it is not required for the import of TIMM23. Overexpression increases the formation and secretion of LPA, resulting in transactivation of EGFR and activation of the downstream MAPK signaling pathway, leading to increased cell growth. This Pongo abelii (Sumatran orangutan) protein is Acylglycerol kinase, mitochondrial.